A 416-amino-acid polypeptide reads, in one-letter code: Tryptophan synthase beta chain (416 aa).

Residue lysine 109 is modified to N6-(pyridoxal phosphate)lysine.

The protein belongs to the TrpB family. In terms of assembly, tetramer of two alpha and two beta chains. Pyridoxal 5'-phosphate serves as cofactor.

The catalysed reaction is (1S,2R)-1-C-(indol-3-yl)glycerol 3-phosphate + L-serine = D-glyceraldehyde 3-phosphate + L-tryptophan + H2O. Its pathway is amino-acid biosynthesis; L-tryptophan biosynthesis; L-tryptophan from chorismate: step 5/5. Functionally, the beta subunit is responsible for the synthesis of L-tryptophan from indole and L-serine. This chain is Tryptophan synthase beta chain, found in Mesorhizobium japonicum (strain LMG 29417 / CECT 9101 / MAFF 303099) (Mesorhizobium loti (strain MAFF 303099)).